Reading from the N-terminus, the 187-residue chain is Large ribosomal subunit protein uL6c (187 aa).

This sequence belongs to the universal ribosomal protein uL6 family. Part of the 50S ribosomal subunit.

The protein resides in the plastid. It is found in the chloroplast. Its function is as follows. Binds 23S rRNA. This chain is Large ribosomal subunit protein uL6c (rpl6), found in Thalassiosira pseudonana (Marine diatom).